Here is a 275-residue protein sequence, read N- to C-terminus: Transmembrane protein 202 (275 aa).

The next 4 helical transmembrane spans lie at 60–80 (SGFS…QFLV), 116–136 (ALFL…LSSC), 151–171 (VSML…LFLA), and 193–213 (WCSE…FITF).

The protein localises to the membrane. The chain is Transmembrane protein 202 (Tmem202) from Mus musculus (Mouse).